The following is a 1440-amino-acid chain: Bridge-like lipid transfer protein family member 3A (1440 aa).

Residues 3 to 95 (GIIKKQILKH…KVEVEMKTCE (93 aa)) form the Chorein N-terminal domain. Disordered stretches follow at residues 267–307 (SAHQ…NSSS), 430–456 (ADSL…FQPP), and 751–780 (KPSA…TEHD). Residues 287–307 (SAQQSWAQAFGGSQGNSNSSS) are compositionally biased toward low complexity. Phosphoserine is present on residues Ser-444, Ser-446, Ser-755, and Ser-758. Residues 837–860 (ALLRLKEVLQRLQEQLTKDTESMT) adopt a coiled-coil conformation. Residues 891-1008 (VDADSAGSDS…ETAVNGQGEL (118 aa)) are disordered. A compositionally biased stretch (basic and acidic residues) spans 911-920 (SEDRELKSDA). The segment covering 985–995 (ASSSPAALKPP) has biased composition (low complexity). Phosphoserine is present on residues Ser-988, Ser-1103, and Ser-1106. The segment at 1106-1180 (SFDGVSLDSS…SPAANSSVSP (75 aa)) is disordered. Positions 1134-1150 (LLESESGPESVPPGSLS) are enriched in low complexity. The span at 1151–1180 (NVSDNAGVQGSPLVNNYGQGSPAANSSVSP) shows a compositional bias: polar residues. Residues 1401 to 1435 (KELPILQKELIETKQALANANQDKEKLLQEIRKYN) adopt a coiled-coil conformation.

As to quaternary structure, homodimer (Potential). Interacts with UHRF1.

The protein resides in the late endosome. In terms of biological role, tube-forming lipid transport protein which probably mediates the transfer of lipids between membranes at organelle contact sites. May be involved in the retrograde traffic of vesicle clusters in the endocytic pathway to the Golgi complex. The chain is Bridge-like lipid transfer protein family member 3A from Homo sapiens (Human).